The following is a 407-amino-acid chain: uncharacterized protein (407 aa).

Helical transmembrane passes span 22 to 42, 51 to 71, 101 to 121, 126 to 146, 154 to 174, 179 to 199, 227 to 247, 258 to 278, 286 to 306, 309 to 329, 347 to 367, and 369 to 389; these read IVSV…PLAV, LGFS…ATLA, ALLL…GLLV, VLGI…IGRV, VISW…PVGV, ALIP…GYYL, GLGL…ITLY, LSLT…ANTI, VAIV…LAPV, VALV…PALG, AYSV…GYVA, and AFGY…GVAL.

Belongs to the major facilitator superfamily. YhhS family.

It is found in the cell inner membrane. This is an uncharacterized protein from Burkholderia mallei (strain NCTC 10229).